We begin with the raw amino-acid sequence, 122 residues long: Large ribosomal subunit protein bL12 (122 aa).

It belongs to the bacterial ribosomal protein bL12 family. Homodimer. Part of the ribosomal stalk of the 50S ribosomal subunit. Forms a multimeric L10(L12)X complex, where L10 forms an elongated spine to which 2 to 4 L12 dimers bind in a sequential fashion. Binds GTP-bound translation factors.

Functionally, forms part of the ribosomal stalk which helps the ribosome interact with GTP-bound translation factors. Is thus essential for accurate translation. The polypeptide is Large ribosomal subunit protein bL12 (Mycoplasma mycoides subsp. mycoides SC (strain CCUG 32753 / NCTC 10114 / PG1)).